The chain runs to 124 residues: Fluoride-specific ion channel FluC (124 aa).

A run of 4 helical transmembrane segments spans residues 4–24 (IVAIALFGALGCLARYLLAGW), 32–52 (GFPYGTLTVNVVGAFLIGLIM), 67–87 (IGLTIGFLGGLTTFSTFSYET), and 96–116 (FITAAVNVLASVLVCLACTWL). The Na(+) site is built by Gly75 and Thr78.

Belongs to the fluoride channel Fluc/FEX (TC 1.A.43) family.

The protein resides in the cell inner membrane. The catalysed reaction is fluoride(in) = fluoride(out). Na(+) is not transported, but it plays an essential structural role and its presence is essential for fluoride channel function. In terms of biological role, fluoride-specific ion channel. Important for reducing fluoride concentration in the cell, thus reducing its toxicity. The protein is Fluoride-specific ion channel FluC of Geobacter metallireducens (strain ATCC 53774 / DSM 7210 / GS-15).